A 340-amino-acid chain; its full sequence is MNICVNSLYRLSIPQFHSLYTEEVSDEALTLLFSAVENGDQNCIDLLCNLALRNDDLGHRVEKFLFDLFSGKRTGSSDIDKKINQACLVLHQIANNDITKDNTEWKKLHAPSRLLYMAGSATTDLSKKIGIAHKIMGDQFAQTDQEQVGVENLWCGARMLSSDELAAATQGLVQESPLLSVNYPIGLIHPTTKENILSTQLLEKIAQSGLSHNEVFLVNTGDHWLLCLFYKLAEKIKCLIFNTYYDLNENTKQEIIEAAKIAGISESDEVNFIEMNLQNNVPNGCGLFCYHTIQLLSNAGQNDPATTLREFAENFLTLSVEEQALFNTQTRRQIYEYSLQ.

Histidine 223 is a catalytic residue. Cysteine 285 functions as the Nucleophile in the catalytic mechanism.

This sequence belongs to the peptidase C79 family.

The protein localises to the secreted. It is found in the host cytoplasm. In terms of biological role, effector proteins function to alter host cell physiology and promote bacterial survival in host tissues. This protease targets the host cell ubiquitin pathway by acting as a deubiquitinase in infected host cells. Specifically hydrolyzes mono- and polyubiquitin substrates in vitro with a preference for 'Lys-63'-linked ubiquitin chains, suggesting that it interferes with a signaling pathway rather than inhibiting proteasomal-dependent degradation of its targets. Does not possess desumoylating activity. Is required for the Salmonella-induced delayed cytotoxicity in macrophages and full virulence. Is not required for intracellular bacterial replication. The polypeptide is Deubiquitinase SseL (sseL) (Salmonella typhimurium (strain LT2 / SGSC1412 / ATCC 700720)).